The sequence spans 88 residues: Small ribosomal subunit protein bS20 (88 aa).

The protein belongs to the bacterial ribosomal protein bS20 family.

Functionally, binds directly to 16S ribosomal RNA. In Chelativorans sp. (strain BNC1), this protein is Small ribosomal subunit protein bS20.